Reading from the N-terminus, the 317-residue chain is Nicotianamine synthase (317 aa).

It belongs to the nicotianamine synthase (NAS)-like family. Homomultimer. In terms of tissue distribution, leaves and roots.

The enzyme catalyses 3 S-adenosyl-L-methionine = nicotianamine + 3 S-methyl-5'-thioadenosine + 3 H(+). Its function is as follows. Synthesizes nicotianamine, a polyamine that serves as a sensor for the physiological iron status within the plant, and/or might be involved in the transport of iron. This Solanum lycopersicum (Tomato) protein is Nicotianamine synthase (CHLN).